Consider the following 296-residue polypeptide: ATP synthase gamma chain (296 aa).

It belongs to the ATPase gamma chain family. F-type ATPases have 2 components, CF(1) - the catalytic core - and CF(0) - the membrane proton channel. CF(1) has five subunits: alpha(3), beta(3), gamma(1), delta(1), epsilon(1). CF(0) has three main subunits: a, b and c.

Its subcellular location is the cell inner membrane. In terms of biological role, produces ATP from ADP in the presence of a proton gradient across the membrane. The gamma chain is believed to be important in regulating ATPase activity and the flow of protons through the CF(0) complex. In Methylorubrum extorquens (strain PA1) (Methylobacterium extorquens), this protein is ATP synthase gamma chain.